The sequence spans 444 residues: Glutamate--tRNA ligase 2 (444 aa).

The 'HIGH' region signature appears at P7–N17. The short motif at K240–R244 is the 'KMSKS' region element. Residue K243 coordinates ATP.

This sequence belongs to the class-I aminoacyl-tRNA synthetase family. Glutamate--tRNA ligase type 1 subfamily. In terms of assembly, monomer.

Its subcellular location is the cytoplasm. It catalyses the reaction tRNA(Glu) + L-glutamate + ATP = L-glutamyl-tRNA(Glu) + AMP + diphosphate. Catalyzes the attachment of glutamate to tRNA(Glu) in a two-step reaction: glutamate is first activated by ATP to form Glu-AMP and then transferred to the acceptor end of tRNA(Glu). This chain is Glutamate--tRNA ligase 2, found in Gluconobacter oxydans (strain 621H) (Gluconobacter suboxydans).